The sequence spans 306 residues: tRNA pseudouridine synthase B (306 aa).

Aspartate 39 (nucleophile) is an active-site residue.

Belongs to the pseudouridine synthase TruB family. Type 1 subfamily.

The enzyme catalyses uridine(55) in tRNA = pseudouridine(55) in tRNA. Functionally, responsible for synthesis of pseudouridine from uracil-55 in the psi GC loop of transfer RNAs. In Arthrobacter sp. (strain FB24), this protein is tRNA pseudouridine synthase B.